Consider the following 1106-residue polypeptide: Probable ATP-citrate synthase (1106 aa).

Citrate is bound by residues N358, T360, and R391. The span at A442–G459 shows a compositional bias: polar residues. A disordered region spans residues A442–L478. Residues V701–G721 and I752–A778 contribute to the ATP site. E718 serves as a coordination point for Mg(2+). The Tele-phosphohistidine intermediate role is filled by H760. Residue L779 to S789 coordinates CoA.

This sequence in the N-terminal section; belongs to the succinate/malate CoA ligase beta subunit family. It in the C-terminal section; belongs to the succinate/malate CoA ligase alpha subunit family. In terms of assembly, homotetramer.

It is found in the cytoplasm. It catalyses the reaction oxaloacetate + acetyl-CoA + ADP + phosphate = citrate + ATP + CoA. In terms of biological role, catalyzes the cleavage of citrate into oxaloacetate and acetyl-CoA, the latter serving as common substrate in multiple biochemical reactions in protein, carbohydrate and lipid metabolism. This chain is Probable ATP-citrate synthase, found in Caenorhabditis elegans.